The primary structure comprises 376 residues: Response regulator aspartate phosphatase H (376 aa).

TPR repeat units follow at residues 99 to 132 (YYSL…LPFV), 139 to 172 (AEFH…YQNH), 180 to 213 (IQSL…AMDI), 220 to 253 (AISL…SREK), 259 to 292 (PKVL…ITAR), and 334 to 367 (EACA…QEDI).

The protein belongs to the Rap family. Homodimer. Interacts with phosphorylated Spo0F. Each RapH protomer is bound to a monomer of Spo0F, forming a heterotetrameric complex. May also interact with non-phosphorylated Spo0F to inhibit the sporulation phosphorelay. Interacts with the C-terminal DNA-binding region of ComA. Does not interact with DegU.

It localises to the cytoplasm. Both activities are inhibited by RapH. Dual specificity regulatory protein that can control both sporulation and competence by acting on two distinct response regulators: Spo0F and ComA, respectively. Is involved in the temporal separation of competence and sporulation. Acts as a phosphatase that specifically dephosphorylates the sporulation initiation phosphotransferase Spo0F and inhibits its activity. RapH can also antagonize sporulation by sterically blocking phosphoryl transfer to and from Spo0F. In addition, inhibits the activity of ComA, a transcriptional factor that regulates the development of genetic competence. Acts by binding to ComA, leading to the inhibition of its DNA-binding activity. This is Response regulator aspartate phosphatase H (rapH) from Bacillus subtilis (strain 168).